Reading from the N-terminus, the 415-residue chain is Serine hydroxymethyltransferase (415 aa).

(6S)-5,6,7,8-tetrahydrofolate contacts are provided by residues Leu117 and 121-123; that span reads GHL. N6-(pyridoxal phosphate)lysine is present on Lys226.

Belongs to the SHMT family. As to quaternary structure, homodimer. Pyridoxal 5'-phosphate is required as a cofactor.

It is found in the cytoplasm. The catalysed reaction is (6R)-5,10-methylene-5,6,7,8-tetrahydrofolate + glycine + H2O = (6S)-5,6,7,8-tetrahydrofolate + L-serine. It participates in one-carbon metabolism; tetrahydrofolate interconversion. The protein operates within amino-acid biosynthesis; glycine biosynthesis; glycine from L-serine: step 1/1. Its function is as follows. Catalyzes the reversible interconversion of serine and glycine with tetrahydrofolate (THF) serving as the one-carbon carrier. This reaction serves as the major source of one-carbon groups required for the biosynthesis of purines, thymidylate, methionine, and other important biomolecules. Also exhibits THF-independent aldolase activity toward beta-hydroxyamino acids, producing glycine and aldehydes, via a retro-aldol mechanism. The chain is Serine hydroxymethyltransferase from Dehalococcoides mccartyi (strain ATCC BAA-2266 / KCTC 15142 / 195) (Dehalococcoides ethenogenes (strain 195)).